A 1239-amino-acid polypeptide reads, in one-letter code: GRB10-interacting GYF protein 2 (1239 aa).

Disordered stretches follow at residues 105–184 and 206–409; these read TNRG…GVRG and DERG…IVPA. A compositionally biased stretch (basic and acidic residues) spans 153 to 181; that stretch reads GAREMHRSQSWEERGDRRFEKPARKEPDG. The span at 231-240 shows a compositional bias: acidic residues; sequence CLDDAEDETG. The span at 241 to 252 shows a compositional bias: polar residues; that stretch reads TFDSSGAFLSSK. Composition is skewed to basic and acidic residues over residues 257–272 and 318–331; these read VQKE…DFHP and PDHK…RTDM. The GYF domain occupies 488 to 536; that stretch reads QQKWYYKDPQGEIQGPFSNREMAEWYQAGYFPMTLLLRRVCDETFQPLG. Positions 678–737 are enriched in basic and acidic residues; the sequence is DKVKAAKMEQERREAELRAKQEEEEQHRRKEAEEERKRREEEELARRKQEEALQRQKELA. Disordered stretches follow at residues 678 to 749, 763 to 812, 843 to 960, and 1057 to 1085; these read DKVK…ERQR, EEER…RQLE, AEEE…KPTG, and APRN…KVEQ. A compositionally biased stretch (basic and acidic residues) spans 843-862; it reads AEEEERNKREEAQRQKELQR. Residues 863–885 show a composition bias toward low complexity; that stretch reads QRQQQQEALRRLQLQQQQQQLAQ. The span at 888–900 shows a compositional bias: polar residues; the sequence is LPSSSTWGQQVTP. A compositionally biased stretch (low complexity) spans 901-913; sequence SAASQSALSLAEI. Residues 914–933 show a composition bias toward basic and acidic residues; sequence QKLEEERERQKLQEQRHQQQ. 2 stretches are compositionally biased toward low complexity: residues 934 to 948 and 1060 to 1077; these read ELKA…QQQK and NATS…GSNS.

Belongs to the GIGYF family. Component of the 4EHP-GYF2 complex.

Its function is as follows. Key component of the 4EHP-GYF2 complex, a multiprotein complex that acts as a repressor of translation initiation. In association with EIF4E2, assists ribosome-associated quality control (RQC) by sequestering the mRNA cap, blocking ribosome initiation and decreasing the translational load on problematic messages. The protein is GRB10-interacting GYF protein 2 (gigyf2) of Xenopus laevis (African clawed frog).